The following is a 264-amino-acid chain: Small ribosomal subunit protein uS2 (264 aa).

Acidic residues predominate over residues 243-253; sequence IEAAEDGEEVD. The interval 243–264 is disordered; sequence IEAAEDGEEVDNAQLTSSQGRS. Polar residues predominate over residues 255 to 264; sequence AQLTSSQGRS.

It belongs to the universal ribosomal protein uS2 family.

This is Small ribosomal subunit protein uS2 from Deinococcus geothermalis (strain DSM 11300 / CIP 105573 / AG-3a).